Here is a 288-residue protein sequence, read N- to C-terminus: Acetyl-coenzyme A carboxylase carboxyl transferase subunit beta (288 aa).

The 257-residue stretch at 32–288 (LFAKCPACKH…LELHTEVENV (257 aa)) folds into the CoA carboxyltransferase N-terminal domain. Zn(2+)-binding residues include cysteine 36, cysteine 39, cysteine 54, and cysteine 57. The C4-type zinc-finger motif lies at 36–57 (CPACKHTIYQKDLGKNKVCPNC).

This sequence belongs to the AccD/PCCB family. In terms of assembly, acetyl-CoA carboxylase is a heterohexamer composed of biotin carboxyl carrier protein (AccB), biotin carboxylase (AccC) and two subunits each of ACCase subunit alpha (AccA) and ACCase subunit beta (AccD). Requires Zn(2+) as cofactor.

It localises to the cytoplasm. It catalyses the reaction N(6)-carboxybiotinyl-L-lysyl-[protein] + acetyl-CoA = N(6)-biotinyl-L-lysyl-[protein] + malonyl-CoA. It participates in lipid metabolism; malonyl-CoA biosynthesis; malonyl-CoA from acetyl-CoA: step 1/1. In terms of biological role, component of the acetyl coenzyme A carboxylase (ACC) complex. Biotin carboxylase (BC) catalyzes the carboxylation of biotin on its carrier protein (BCCP) and then the CO(2) group is transferred by the transcarboxylase to acetyl-CoA to form malonyl-CoA. This Lactococcus lactis subsp. lactis (strain IL1403) (Streptococcus lactis) protein is Acetyl-coenzyme A carboxylase carboxyl transferase subunit beta.